Here is a 256-residue protein sequence, read N- to C-terminus: MEAIKVLIADDNREFCEVLEEYFNEQEDFVLSGVAHNGQETLELIQEQEPDIVILDIIMPHLDGIGVLEKLQVLNFEPRPKIVILTALGQESMTMRSVELGADYYILKPFDLEVLGNRLRQLANGHPLPTAPSQVSRAGRNMDVEVTKIIHQMGVPAHIKGYQYLREAILMVIDDVSLLGAVTKELYPLIARKYMTTPSRVERAIRHAIELAWDRGNVEMMNKFFGYTINVERGKPTNSEFIAMVADKLRIGAKIN.

The region spanning 5-123 is the Response regulatory domain; it reads KVLIADDNRE…VLGNRLRQLA (119 aa). 3 residues coordinate Ca(2+): Asp10, Asp11, and Asp56. Position 56 is a 4-aspartylphosphate (Asp56). The segment at residues 188–207 is a DNA-binding region (H-T-H motif); it reads PLIARKYMTTPSRVERAIRH.

Ca(2+) serves as cofactor.

The protein localises to the cytoplasm. Functionally, may play the central regulatory role in sporulation. It may be an element of the effector pathway responsible for the activation of sporulation genes in response to nutritional stress. Spo0A may act in concert with spo0H (a sigma factor) to control the expression of some genes that are critical to the sporulation process. The sequence is that of Stage 0 sporulation protein A homolog (spo0A) from Moorella thermoacetica (strain ATCC 39073 / JCM 9320).